A 747-amino-acid chain; its full sequence is Sushi domain-containing protein 1 (747 aa).

An N-terminal signal peptide occupies residues 1 to 29 (MGRGPWDAGPSRRLLPLLLLLGLARGAAG). Residues 30–721 (APGPDGLDVC…WAQVKDSSLM (692 aa)) lie on the Extracellular side of the membrane. In terms of domain architecture, EGF-like 1 spans 35–72 (GLDVCATCHEHATCQQREGKKICICNYGFVGNGRTQCV). 5 cysteine pairs are disulfide-bonded: C39–C48, C42–C57, C59–C71, C77–C91, and C85–C100. In terms of domain architecture, EGF-like 2; calcium-binding spans 73-112 (DKNECQFGATLVCGNHTSCHNTPGGFYCICLEGYRATNNN). Residues N87 and N112 are each glycosylated (N-linked (GlcNAc...) asparagine). The EGF-like 3; calcium-binding domain maps to 125–162 (DIDECEVSGLCRHGGRCVNTHGSFECYCMDGYLPRNGP). Cystine bridges form between C129–C141, C135–C150, C179–C221, C206–C234, C239–C281, and C266–C294. Sushi domains are found at residues 177–236 (IDCG…HCQE) and 237–296 (INCG…TCTE). N193 carries an N-linked (GlcNAc...) asparagine glycan. The N-linked (GlcNAc...) asparagine glycan is linked to N253. N-linked (GlcNAc...) asparagine glycans are attached at residues N348, N367, and N563. The chain crosses the membrane as a helical span at residues 722-742 (LLQMAGVGLGSLAVVIILTFL). Over 743 to 747 (SFSAV) the chain is Cytoplasmic.

The protein localises to the membrane. The protein is Sushi domain-containing protein 1 (SUSD1) of Homo sapiens (Human).